Reading from the N-terminus, the 327-residue chain is Serpentine receptor class gamma-2 (327 aa).

The next 6 membrane-spanning stretches (helical) occupy residues 35–55 (LVQF…LYIL), 70–90 (ILFI…IFFA), 157–177 (MKYA…NIII), 181–203 (LPVY…ATMT), 244–264 (IASF…SLFA), and 277–297 (FLLP…MVMA).

The protein belongs to the nematode receptor-like protein srg family.

It localises to the membrane. The protein is Serpentine receptor class gamma-2 (srg-2) of Caenorhabditis elegans.